Reading from the N-terminus, the 399-residue chain is Probable 2,3-bisphosphoglycerate-independent phosphoglycerate mutase (399 aa).

This sequence belongs to the BPG-independent phosphoglycerate mutase family. A-PGAM subfamily.

It catalyses the reaction (2R)-2-phosphoglycerate = (2R)-3-phosphoglycerate. It functions in the pathway carbohydrate degradation; glycolysis; pyruvate from D-glyceraldehyde 3-phosphate: step 3/5. Functionally, catalyzes the interconversion of 2-phosphoglycerate and 3-phosphoglycerate. This is Probable 2,3-bisphosphoglycerate-independent phosphoglycerate mutase from Geobacter sulfurreducens (strain ATCC 51573 / DSM 12127 / PCA).